The following is a 415-amino-acid chain: Histidine--tRNA ligase (415 aa).

This sequence belongs to the class-II aminoacyl-tRNA synthetase family. Homodimer.

Its subcellular location is the cytoplasm. The catalysed reaction is tRNA(His) + L-histidine + ATP = L-histidyl-tRNA(His) + AMP + diphosphate + H(+). In Clostridium botulinum (strain Okra / Type B1), this protein is Histidine--tRNA ligase.